Here is a 141-residue protein sequence, read N- to C-terminus: Putative nickel-responsive regulator (141 aa).

Residues histidine 80, histidine 91, histidine 93, and cysteine 99 each coordinate Ni(2+).

The protein belongs to the transcriptional regulatory CopG/NikR family. Requires Ni(2+) as cofactor.

Transcriptional regulator. The protein is Putative nickel-responsive regulator of Methanococcus maripaludis (strain C6 / ATCC BAA-1332).